Here is a 74-residue protein sequence, read N- to C-terminus: Protein translocase subunit SecE (74 aa).

Topologically, residues 1–36 (MKTDFNQKIEQLKEFIEECRRVWLVLKKPTKDEYLA) are cytoplasmic. The chain crosses the membrane as a helical span at residues 37–62 (VAKVTALGISLLGIIGYIIHVPATYI). Residues 63 to 74 (KGILKPPTTPRV) lie on the Extracellular side of the membrane.

This sequence belongs to the SecE/SEC61-gamma family. In terms of assembly, component of the Sec protein translocase complex. Heterotrimer consisting of alpha (SecY), beta (SecG) and gamma (SecE) subunits. The heterotrimers can form oligomers, although 1 heterotrimer is thought to be able to translocate proteins. Interacts with the ribosome. May interact with SecDF, and other proteins may be involved.

Its subcellular location is the cell membrane. Essential subunit of the protein translocation channel SecYEG. Clamps together the 2 halves of SecY. May contact the channel plug during translocation. This is Protein translocase subunit SecE from Methanocaldococcus jannaschii (strain ATCC 43067 / DSM 2661 / JAL-1 / JCM 10045 / NBRC 100440) (Methanococcus jannaschii).